Consider the following 307-residue polypeptide: Protoheme IX farnesyltransferase (307 aa).

A run of 9 helical transmembrane segments spans residues 28-48 (LVIF…NPIL), 50-70 (FTAI…NQWW), 99-117 (FGIL…AINW), 121-138 (IILA…TIWL), 146-166 (IVIG…AVTG), 173-193 (VLLF…LALF), 219-239 (ILVY…IGAT), 241-261 (AIYG…SVPV), and 278-298 (LFGF…ADRY).

The protein belongs to the UbiA prenyltransferase family. Protoheme IX farnesyltransferase subfamily.

The protein localises to the cell inner membrane. The enzyme catalyses heme b + (2E,6E)-farnesyl diphosphate + H2O = Fe(II)-heme o + diphosphate. The protein operates within porphyrin-containing compound metabolism; heme O biosynthesis; heme O from protoheme: step 1/1. Functionally, converts heme B (protoheme IX) to heme O by substitution of the vinyl group on carbon 2 of heme B porphyrin ring with a hydroxyethyl farnesyl side group. In Erythrobacter litoralis (strain HTCC2594), this protein is Protoheme IX farnesyltransferase.